The sequence spans 404 residues: Voltage-gated potassium channel subunit beta-3 (404 aa).

A compositionally biased stretch (polar residues) spans 1 to 14; that stretch reads MQVSIACTEQNLRS. The segment at 1–77 is disordered; it reads MQVSIACTEQ…LRESTGRGTG (77 aa). Residues 28–50 show a composition bias toward gly residues; the sequence is PGGGNGGPAGGGHGNPPGGGGSG. Positions 97, 98, 104, and 126 each coordinate NADP(+). Y131 functions as the Proton donor/acceptor in the catalytic mechanism. NADP(+)-binding residues include N199, S229, R230, Q255, W284, P286, L287, A288, C289, K295, R305, G364, S366, Q370, and E373.

It belongs to the shaker potassium channel beta subunit family. Forms heteromultimeric complex with alpha subunits. Interacts with KCNA5 and KCNB2. As to expression, brain specific. Most prominent expression in cerebellum. Weaker signals detected in cortex, occipital lobe, frontal lobe and temporal lobe. Not detected in spinal cord, heart, lung, liver, kidney, pancreas, placenta and skeletal muscle.

The protein resides in the cytoplasm. Regulatory subunit of the voltage-gated potassium (Kv) channels composed of pore-forming and potassium-conducting alpha subunits and of regulatory beta subunit. The beta-3/KCNAB3 subunit may mediate closure of potassium channels. Increases inactivation of Kv1.5/KCNA5 alpha subunit-containing channels. May display nicotinamide adenine dinucleotide phosphate (NADPH)-dependent aldoketoreductase activity. The binding of oxidized and reduced NADP(H) cofactors may be required for the regulation of potassium channel activity. This chain is Voltage-gated potassium channel subunit beta-3, found in Homo sapiens (Human).